A 131-amino-acid polypeptide reads, in one-letter code: Large ribosomal subunit protein bL17 (131 aa).

The protein belongs to the bacterial ribosomal protein bL17 family. In terms of assembly, part of the 50S ribosomal subunit. Contacts protein L32.

In Thermotoga sp. (strain RQ2), this protein is Large ribosomal subunit protein bL17.